A 699-amino-acid polypeptide reads, in one-letter code: MGINVSRTADLGSNQWLQRFVGRQHIAHDDEAFWNGLLNYNIVLPENSQDQLNLDSRLEALCQSFIGNNLKTGNFGSLVTVFLEKTSELLSLSDQESNMHVWQTFNALFIIRSLVKYINETGSEFQLLQHFEAMPNAELLQAALEQQQQTPAESATIAMEATEQSAAAAVPVIVDGSKFETFIDALVNLIVVIPVKEFTYHLHLEAVNMLITLLSVHLFAQQPTDKSIVFRTVFKCQHANVLMSALLHFVARIVEVPHTMFGSSSAGSFVFGIAESLLSIFTFRKQPDILKAGQAAGGGELSQRFRTHYPLANQSLLLILILTNHCTAQDNAYRTSLFSCADSKDSPKQGAVSFQIDFSAVYETLCTIVTIDQATLLLYLLLHRNERFYRFVMQQQDLEQLVIPILQTLYNAPDSNSHHIYMSLIVLLILSEDEGFNKNVHTIMLKNITWYTERTISEISLGGILILIVIRTIQYNMLKMRDKYLHTNCLAALANMSGHFRALHPYVAQRLVSLFETLARKHTRLDAQLKEPADSAVFVNVSTTPEDMLQDLSVLEEVLRMVLEILNSCLTNQLVYCPNLVYTLLYKRSVFEGFRSHHAFQDVIQNIDMVVGFFSSRLQRVQEQRGELGVNEVLEVISKGASQWSSDRLRKFPDLKFKYVEEDAPEEFFIPYVWTLVCKYGCVHFSSESIKSVTTDIAC.

Gly-2 carries the N-myristoyl glycine lipid modification. Position 346 is a phosphoserine (Ser-346).

Belongs to the dymeclin family.

The chain is Dymeclin from Drosophila melanogaster (Fruit fly).